Here is a 485-residue protein sequence, read N- to C-terminus: Cobyric acid synthase (485 aa).

A GATase cobBQ-type domain is found at 250 to 436; sequence RRIVACPILP…IHGLLASPAL (187 aa). The active-site Nucleophile is cysteine 332. Histidine 428 is a catalytic residue.

It belongs to the CobB/CobQ family. CobQ subfamily.

It participates in cofactor biosynthesis; adenosylcobalamin biosynthesis. Functionally, catalyzes amidations at positions B, D, E, and G on adenosylcobyrinic A,C-diamide. NH(2) groups are provided by glutamine, and one molecule of ATP is hydrogenolyzed for each amidation. This Sphingopyxis alaskensis (strain DSM 13593 / LMG 18877 / RB2256) (Sphingomonas alaskensis) protein is Cobyric acid synthase.